Here is a 74-residue protein sequence, read N- to C-terminus: Exodeoxyribonuclease 7 small subunit (74 aa).

This sequence belongs to the XseB family. As to quaternary structure, heterooligomer composed of large and small subunits.

The protein localises to the cytoplasm. It catalyses the reaction Exonucleolytic cleavage in either 5'- to 3'- or 3'- to 5'-direction to yield nucleoside 5'-phosphates.. Bidirectionally degrades single-stranded DNA into large acid-insoluble oligonucleotides, which are then degraded further into small acid-soluble oligonucleotides. This Neisseria meningitidis serogroup C / serotype 2a (strain ATCC 700532 / DSM 15464 / FAM18) protein is Exodeoxyribonuclease 7 small subunit.